A 189-amino-acid chain; its full sequence is Nucleolar protein 16 (189 aa).

Positions 1 to 33 are enriched in basic residues; sequence MARDVKKRGKPAYTNRRNRQKYLKKKDNKKKLS. The interval 1 to 34 is disordered; sequence MARDVKKRGKPAYTNRRNRQKYLKKKDNKKKLSK.

It belongs to the NOP16 family.

The protein localises to the nucleus. The protein resides in the nucleolus. This Caenorhabditis elegans protein is Nucleolar protein 16.